The primary structure comprises 299 residues: tRNA dimethylallyltransferase (299 aa).

11-18 (GPTAVGKT) provides a ligand contact to ATP. 13–18 (TAVGKT) serves as a coordination point for substrate. Positions 36-39 (DSQQ) are interaction with substrate tRNA.

The protein belongs to the IPP transferase family. In terms of assembly, monomer. The cofactor is Mg(2+).

It catalyses the reaction adenosine(37) in tRNA + dimethylallyl diphosphate = N(6)-dimethylallyladenosine(37) in tRNA + diphosphate. Catalyzes the transfer of a dimethylallyl group onto the adenine at position 37 in tRNAs that read codons beginning with uridine, leading to the formation of N6-(dimethylallyl)adenosine (i(6)A). This Streptococcus pyogenes serotype M49 (strain NZ131) protein is tRNA dimethylallyltransferase.